A 250-amino-acid polypeptide reads, in one-letter code: 1-(5-phosphoribosyl)-5-[(5-phosphoribosylamino)methylideneamino] imidazole-4-carboxamide isomerase (250 aa).

Residue Asp12 is the Proton acceptor of the active site. The active-site Proton donor is Asp134.

The protein belongs to the HisA/HisF family.

The protein localises to the cytoplasm. It catalyses the reaction 1-(5-phospho-beta-D-ribosyl)-5-[(5-phospho-beta-D-ribosylamino)methylideneamino]imidazole-4-carboxamide = 5-[(5-phospho-1-deoxy-D-ribulos-1-ylimino)methylamino]-1-(5-phospho-beta-D-ribosyl)imidazole-4-carboxamide. It functions in the pathway amino-acid biosynthesis; L-histidine biosynthesis; L-histidine from 5-phospho-alpha-D-ribose 1-diphosphate: step 4/9. This is 1-(5-phosphoribosyl)-5-[(5-phosphoribosylamino)methylideneamino] imidazole-4-carboxamide isomerase from Actinobacillus pleuropneumoniae serotype 7 (strain AP76).